The following is a 1093-amino-acid chain: Protein transport protein Sec24A (1093 aa).

Disordered regions lie at residues 1–29, 60–168, 189–226, and 294–328; these read MSQPGIPASGGAPASLQAQNGAALASGSP, HPIP…TSLT, GPSVPPLVNPPLPTTFQPGAPHGPPPAGGPPPVRALTP, and SLPPGYQNTTPPGATGVPPSSLNYPSGPQAFTQTP. Polar residues-rich tracts occupy residues 112-126 and 138-168; these read ASQNPATTPMPSSSF and WQYNYPSTASQTNHCPRASSQPTVSGNTSLT. Pro residues-rich tracts occupy residues 191–201 and 209–221; these read SVPPLVNPPLP and PHGPPPAGGPPPV. The segment covering 299-328 has biased composition (polar residues); that stretch reads YQNTTPPGATGVPPSSLNYPSGPQAFTQTP. Zn(2+) contacts are provided by Cys-431, Cys-434, Cys-452, and Cys-455. The interval 431-455 is zinc finger-like; that stretch reads CRSCRTYINPFVSFLDQRRWKCNLC. A Gelsolin-like repeat occupies 966–1038; that stretch reads PQPPILQLSV…TPESARIIAF (73 aa).

This sequence belongs to the SEC23/SEC24 family. SEC24 subfamily. In terms of assembly, COPII is composed of at least five proteins: the Sec23/24 complex, the Sec13/31 complex and Sar1. Interacts with TMED2. Interacts (as part of the Sec23/24 complex) with SEC22B; recruits SEC22B into COPII-coated vesicles for its transport from the endoplasmic reticulum to the Golgi. Interacts with STING1; promoting STING1 translocation to COPII vesicles in a STEEP1-dependent manner. Interacts with TMEM39A. Interacts with SACM1L; this interaction is reduced in the absence of TMEM39A. Interacts with kinase FAM20C; transport of FAM20C from the endoplasmic reticulum to the Golgi is likely to be mediated by COPII vesicles.

Its subcellular location is the cytoplasmic vesicle. The protein resides in the COPII-coated vesicle membrane. The protein localises to the endoplasmic reticulum membrane. It is found in the cytoplasm. It localises to the cytosol. Functionally, component of the coat protein complex II (COPII) which promotes the formation of transport vesicles from the endoplasmic reticulum (ER). The coat has two main functions, the physical deformation of the endoplasmic reticulum membrane into vesicles and the selection of cargo molecules for their transport to the Golgi complex. Plays a central role in cargo selection within the COPII complex and together with SEC24B may have a different specificity compared to SEC24C and SEC24D. May package preferentially cargos with cytoplasmic DxE or LxxLE motifs and may also recognize conformational epitopes. The polypeptide is Protein transport protein Sec24A (Homo sapiens (Human)).